The following is a 444-amino-acid chain: Exodeoxyribonuclease 7 large subunit (444 aa).

Belongs to the XseA family. In terms of assembly, heterooligomer composed of large and small subunits.

It localises to the cytoplasm. The catalysed reaction is Exonucleolytic cleavage in either 5'- to 3'- or 3'- to 5'-direction to yield nucleoside 5'-phosphates.. Bidirectionally degrades single-stranded DNA into large acid-insoluble oligonucleotides, which are then degraded further into small acid-soluble oligonucleotides. This is Exodeoxyribonuclease 7 large subunit from Xylella fastidiosa (strain 9a5c).